The chain runs to 358 residues: Gibberellin receptor GID1B (358 aa).

A2 is modified (N-acetylalanine). The short motif at H113–G115 is the Involved in the stabilization of the negatively charged intermediate by the formation of the oxyanion hole element. Residues G115–S116, Y127, and S191 each bind gibberellin A4. Gibberellin A3 contacts are provided by S116, Y127, S191, and F238. Residue S191 is part of the active site. D289 is an active-site residue. A gibberellin A4-binding site is contributed by G320. G320 is a gibberellin A3 binding site.

The protein belongs to the 'GDXG' lipolytic enzyme family. As to quaternary structure, interacts with the DELLA proteins GAI, RGA, RGL1, RGL2 and RGL3 in a GA-dependent manner. As to expression, widely expressed.

It localises to the nucleus. Functionally, functions as a soluble gibberellin (GA) receptor. GA is an essential hormone that regulates growth and development in plants. Binds with high affinity the biologically active gibberellin GA4, but has no affinity for the biologically inactive GAs. In response to GA, interacts with specific DELLA proteins, known as repressors of GA-induced growth, and targets them for degradation via proteasome. Seems to be required for GA signaling that controls root growth, seed germination and flower development. May function as a dominant GA receptor at low GA concentrations in germination. Partially redundant with GID1A and GID1C. The polypeptide is Gibberellin receptor GID1B (GID1B) (Arabidopsis thaliana (Mouse-ear cress)).